A 254-amino-acid polypeptide reads, in one-letter code: 30 kDa major early protein (254 aa).

The sequence is that of 30 kDa major early protein from Human cytomegalovirus (strain Eisenhardt) (HHV-5).